Here is a 239-residue protein sequence, read N- to C-terminus: DNA oxidative demethylase ALKBH2 (239 aa).

The PCNA-binding signature appears at 3–7; sequence KFLVR. Residues 11-32 are disordered; that stretch reads RDLQGGGEEPAPTGGASGDLKS. Substrate contacts are provided by residues 80 to 82 and 100 to 102; these read FGK and YTF. The Fe2OG dioxygenase domain occupies 130–235; it reads TFNFVLVNRY…RVNLTFRKIL (106 aa). 2-oxoglutarate is bound by residues Asn137, Tyr139, and His149. Positions 149 and 151 each coordinate Fe cation. Asp152 provides a ligand contact to substrate. 2-oxoglutarate-binding residues include His214, Arg226, Thr230, and Arg232. His214 contributes to the Fe cation binding site.

Belongs to the alkB family. In terms of assembly, interacts with PCNA homotrimer; this interaction is enhanced during the S-phase of the cell cycle. Interacts with nucleolar proteins NCL, UBTF and NPM1. Interacts with XRCC5-XRCC6 heterodimer. Requires Fe(2+) as cofactor. In terms of tissue distribution, detected in liver, testis and kidney (at protein level). Detected in heart and testis.

The protein resides in the nucleus. Its subcellular location is the nucleolus. The protein localises to the nucleoplasm. The enzyme catalyses a methylated nucleobase within DNA + 2-oxoglutarate + O2 = a nucleobase within DNA + formaldehyde + succinate + CO2. It carries out the reaction an N(1)-methyl-2'-deoxyadenosine in double-stranded DNA + 2-oxoglutarate + O2 = a 2'-deoxyadenosine in double-stranded DNA + formaldehyde + succinate + CO2 + H(+). It catalyses the reaction an N(1)-methyl-2'-deoxyadenosine in single-stranded DNA + 2-oxoglutarate + O2 = a 2'-deoxyadenosine in single-stranded DNA + formaldehyde + succinate + CO2 + H(+). The catalysed reaction is an N(3)-methyl-2'-deoxycytidine in double-stranded DNA + 2-oxoglutarate + O2 = a 2'-deoxycytidine in double-stranded DNA + formaldehyde + succinate + CO2 + H(+). The enzyme catalyses an N(3)-methyl-2'-deoxycytidine in single-stranded DNA + 2-oxoglutarate + O2 = a 2'-deoxycytidine in single-stranded DNA + formaldehyde + succinate + CO2 + H(+). It carries out the reaction a 1,N(6)-etheno-2'-deoxyadenosine in double-stranded DNA + 2-oxoglutarate + O2 + H2O = a 2'-deoxyadenosine in double-stranded DNA + glyoxal + succinate + CO2. It catalyses the reaction a 1,N(6)-etheno-2'-deoxyadenosine in single-stranded DNA + 2-oxoglutarate + O2 + H2O = a 2'-deoxyadenosine in single-stranded DNA + glyoxal + succinate + CO2. The catalysed reaction is a 3,N(4)-etheno-2'-deoxycytidine in double-stranded DNA + 2-oxoglutarate + O2 + H2O = a 2'-deoxycytidine in double-stranded DNA + glyoxal + succinate + CO2. The enzyme catalyses a 3,N(4)-etheno-2'-deoxycytidine in single-stranded DNA + 2-oxoglutarate + O2 + H2O = a 2'-deoxycytidine in single-stranded DNA + glyoxal + succinate + CO2. It carries out the reaction a 1,N(2)-etheno-2'-deoxyguanosine in double-stranded DNA + 2-oxoglutarate + O2 + H2O = a 2'-deoxyguanosine in double-stranded DNA + glyoxal + succinate + CO2. Its activity is regulated as follows. Activated by magnesium ions. Its function is as follows. Dioxygenase that repairs alkylated nucleic acid bases by direct reversal oxidative dealkylation. Can process both double-stranded (ds) and single-stranded (ss) DNA substrates, with a strong preference for dsDNA. Uses molecular oxygen, 2-oxoglutarate and iron as cofactors to oxidize the alkyl groups that are subsequently released as aldehydes, regenerating the undamaged bases. Probes the base pair stability, locates a weakened base pair and flips the damaged base to accommodate the lesion in its active site for efficient catalysis. Repairs monoalkylated bases, specifically N1-methyladenine and N3-methylcytosine, as well as higher order alkyl adducts such as bases modified with exocyclic bridged adducts known as etheno adducts including 1,N6-ethenoadenine, 3,N4-ethenocytosine and 1,N2-ethenoguanine. Acts as a gatekeeper of genomic integrity under alkylation stress. Efficiently repairs alkylated lesions in ribosomal DNA (rDNA). These lesions can cause ss- and dsDNA strand breaks that severely impair rDNA transcription. In a response mechanism to DNA damage, associates with PCNA at replication forks to repair alkylated adducts prior to replication. In Mus musculus (Mouse), this protein is DNA oxidative demethylase ALKBH2 (Alkbh2).